Here is a 504-residue protein sequence, read N- to C-terminus: Cytochrome P450 3A11 (504 aa).

Cys443 contacts heme.

This sequence belongs to the cytochrome P450 family. Requires heme as cofactor. Highly expressed in liver.

It is found in the endoplasmic reticulum membrane. It localises to the microsome membrane. It carries out the reaction an organic molecule + reduced [NADPH--hemoprotein reductase] + O2 = an alcohol + oxidized [NADPH--hemoprotein reductase] + H2O + H(+). Its function is as follows. Catalyzes erythromycin N-demethylation, nifedipine oxidation and testosterone 6 beta-hydroxylation. This Mus musculus (Mouse) protein is Cytochrome P450 3A11 (Cyp3a11).